A 24-amino-acid polypeptide reads, in one-letter code: Prokineticin 1-like protein (24 aa).

Cys-7 and Cys-19 form a disulfide bridge.

In terms of tissue distribution, expressed by the skin glands.

It is found in the secreted. Stimulates insulin secretion by BRIN-BD11 cells in vitro. The polypeptide is Prokineticin 1-like protein (Pelophylax saharicus (Sahara frog)).